Here is a 589-residue protein sequence, read N- to C-terminus: Coiled-coil domain-containing protein 22 homolog (589 aa).

Coiled-coil stretches lie at residues 287–426 and 523–589; these read KTPL…LQTK and CEEL…TSRQ. Residues 568–589 are disordered; that stretch reads EMQNESQRLEESIRRMEVTSRQ. The segment covering 574–589 has biased composition (basic and acidic residues); it reads QRLEESIRRMEVTSRQ.

This sequence belongs to the CCDC22 family.

This Aedes aegypti (Yellowfever mosquito) protein is Coiled-coil domain-containing protein 22 homolog.